We begin with the raw amino-acid sequence, 211 residues long: Thymidylate kinase (211 aa).

11 to 18 (GPDGAGKT) is a binding site for ATP.

The protein belongs to the thymidylate kinase family.

The enzyme catalyses dTMP + ATP = dTDP + ADP. Its function is as follows. Phosphorylation of dTMP to form dTDP in both de novo and salvage pathways of dTTP synthesis. This is Thymidylate kinase from Streptococcus agalactiae serotype Ia (strain ATCC 27591 / A909 / CDC SS700).